The following is a 544-amino-acid chain: NADH-quinone oxidoreductase subunit C/D (544 aa).

The NADH dehydrogenase I subunit C stretch occupies residues 1–138 (MLNCDMLIDS…KGQICTETED (138 aa)). Residues 161–544 (MLLNVGPSHP…MNFIAGEFDR (384 aa)) form an NADH dehydrogenase I subunit D region.

In the N-terminal section; belongs to the complex I 30 kDa subunit family. The protein in the C-terminal section; belongs to the complex I 49 kDa subunit family. As to quaternary structure, NDH-1 is composed of 13 different subunits. Subunits NuoB, CD, E, F, and G constitute the peripheral sector of the complex.

The protein resides in the cell inner membrane. It catalyses the reaction a quinone + NADH + 5 H(+)(in) = a quinol + NAD(+) + 4 H(+)(out). Functionally, NDH-1 shuttles electrons from NADH, via FMN and iron-sulfur (Fe-S) centers, to quinones in the respiratory chain. The immediate electron acceptor for the enzyme in this species is believed to be ubiquinone. Couples the redox reaction to proton translocation (for every two electrons transferred, four hydrogen ions are translocated across the cytoplasmic membrane), and thus conserves the redox energy in a proton gradient. In Aliarcobacter butzleri (strain RM4018) (Arcobacter butzleri), this protein is NADH-quinone oxidoreductase subunit C/D.